Reading from the N-terminus, the 109-residue chain is Nucleoid-associated protein CGSHiEE_00780 (109 aa).

This sequence belongs to the YbaB/EbfC family. As to quaternary structure, homodimer.

It is found in the cytoplasm. The protein localises to the nucleoid. Functionally, binds to DNA and alters its conformation. May be involved in regulation of gene expression, nucleoid organization and DNA protection. The sequence is that of Nucleoid-associated protein CGSHiEE_00780 from Haemophilus influenzae (strain PittEE).